Consider the following 137-residue polypeptide: Small ribosomal subunit protein uS12 (137 aa).

Residues 1 to 57 (MPTINQLVRKPRQSKIKKSDSPALNKGFNSKKKKFTDLNSPQKRGVCTRVGTMTPRK) are disordered. 3-methylthioaspartic acid is present on Asp102. The disordered stretch occupies residues 118-137 (SGVDGRRQGRSLYGTKKPKN).

Belongs to the universal ribosomal protein uS12 family. As to quaternary structure, part of the 30S ribosomal subunit. Contacts proteins S8 and S17. May interact with IF1 in the 30S initiation complex.

With S4 and S5 plays an important role in translational accuracy. Functionally, interacts with and stabilizes bases of the 16S rRNA that are involved in tRNA selection in the A site and with the mRNA backbone. Located at the interface of the 30S and 50S subunits, it traverses the body of the 30S subunit contacting proteins on the other side and probably holding the rRNA structure together. The combined cluster of proteins S8, S12 and S17 appears to hold together the shoulder and platform of the 30S subunit. The protein is Small ribosomal subunit protein uS12 of Staphylococcus aureus (strain COL).